Consider the following 425-residue polypeptide: 2-methylserine hydroxymethyltransferase (425 aa).

Residues leucine 126 and glycine 130–leucine 132 contribute to the (6S)-5,6,7,8-tetrahydrofolate site. Lysine 235 carries the post-translational modification N6-(pyridoxal phosphate)lysine.

Belongs to the SHMT family. In terms of assembly, homodimer. Requires pyridoxal 5'-phosphate as cofactor.

It localises to the cytoplasm. It carries out the reaction (6R)-5,10-methylene-5,6,7,8-tetrahydrofolate + D-alanine + H2O = 2-methylserine + (6S)-5,6,7,8-tetrahydrofolate. It participates in one-carbon metabolism; tetrahydrofolate interconversion. Functionally, catalyzes the reversible interconversion of alpha-methyl-L-serine to D-alanine with tetrahydrofolate (THF) serving as the one-carbon carrier. Cannot use alpha-methyl-D-serine, L-serine, D-serine or L-alanine. This chain is 2-methylserine hydroxymethyltransferase, found in Aminobacter sp.